The chain runs to 489 residues: Dihydropyrimidinase 1 (489 aa).

3 residues coordinate Zn(2+): His-61, His-63, and Lys-156. Residue Lys-156 is modified to N6-carboxylysine. Tyr-161 serves as a coordination point for substrate. Residues His-189 and His-245 each contribute to the Zn(2+) site. Substrate is bound at residue Ser-295. Asp-323 serves as a coordination point for Zn(2+). Asn-344 lines the substrate pocket.

The protein belongs to the metallo-dependent hydrolases superfamily. Hydantoinase/dihydropyrimidinase family. As to quaternary structure, homotetramer. Requires Zn(2+) as cofactor. In terms of processing, carboxylation allows a single lysine to coordinate two zinc ions. In L1-L2 larvae, expressed in body hypodermal cells, hemidesmosomes and in a neuronal cell between the pharynx and ring neuropil. In adults, expression is seen in body hypodermal cells and pharynx.

Its subcellular location is the nucleus. It carries out the reaction 5,6-dihydrouracil + H2O = 3-(carbamoylamino)propanoate + H(+). The polypeptide is Dihydropyrimidinase 1 (dhp-1) (Caenorhabditis elegans).